The primary structure comprises 322 residues: Porphobilinogen deaminase (322 aa).

Residue cysteine 252 is modified to S-(dipyrrolylmethanemethyl)cysteine.

This sequence belongs to the HMBS family. As to quaternary structure, monomer. Dipyrromethane is required as a cofactor.

It catalyses the reaction 4 porphobilinogen + H2O = hydroxymethylbilane + 4 NH4(+). The protein operates within porphyrin-containing compound metabolism; protoporphyrin-IX biosynthesis; coproporphyrinogen-III from 5-aminolevulinate: step 2/4. Tetrapolymerization of the monopyrrole PBG into the hydroxymethylbilane pre-uroporphyrinogen in several discrete steps. The sequence is that of Porphobilinogen deaminase from Caulobacter vibrioides (strain ATCC 19089 / CIP 103742 / CB 15) (Caulobacter crescentus).